We begin with the raw amino-acid sequence, 152 residues long: GLLGLGYGGYGGYGGYGGYGHGLALAAAPAAIAAPAVVAAPAIAHAPAVAVAPAVAHAPAAVSTVSQVSYGTTHYAPAVAKVAAIAAPVAVAAPAIAAAPAVGLGYGGYGHGLSLGYGHGLGLGYAAAPALSLGYGGYGHGLGYGGYGYGHH.

7 consecutive repeat copies span residues 27-30 (AAPA), 33-37 (AAPAV), 39-42 (AAPA), 86-89 (AAPV), 92-95 (AAPA), 98-101 (AAPA), and 127-130 (AAPA).

Functionally, component of the cuticle of migratory locust which contains more than 100 different structural proteins. This is Cuticle protein 64 from Locusta migratoria (Migratory locust).